The following is an 85-amino-acid chain: Depressant insect toxin BmK ITa1 (85 aa).

An N-terminal signal peptide occupies residues 1 to 21 (MKLFLLLLISASMLIDGLVNA). The LCN-type CS-alpha/beta domain occupies 22-82 (DGYIRGSNGC…TWKSESNTCG (61 aa)). 4 disulfides stabilise this stretch: C31/C81, C35/C56, C42/C63, and C46/C65. Glycine amide is present on G82.

Belongs to the long (4 C-C) scorpion toxin superfamily. Sodium channel inhibitor family. Beta subfamily. As to expression, expressed by the venom gland.

The protein resides in the secreted. Its function is as follows. Depressant insect toxins cause a transient contraction paralysis followed by a slow flaccid paralysis. They bind voltage-independently to sodium channels (Nav) and block action potentials, primarily by depolarizing the axonal membrane and suppressing the sodium current. The sequence is that of Depressant insect toxin BmK ITa1 from Olivierus martensii (Manchurian scorpion).